The primary structure comprises 1227 residues: DNA-directed RNA polymerase subunit beta' (1227 aa).

Residues C60, C62, C75, and C78 each coordinate Zn(2+). 3 residues coordinate Mg(2+): D449, D451, and D453. Zn(2+)-binding residues include C847, C921, C928, and C931.

Belongs to the RNA polymerase beta' chain family. The RNAP catalytic core consists of 2 alpha, 1 beta, 1 beta' and 1 omega subunit. When a sigma factor is associated with the core the holoenzyme is formed, which can initiate transcription. Mg(2+) is required as a cofactor. Requires Zn(2+) as cofactor.

The enzyme catalyses RNA(n) + a ribonucleoside 5'-triphosphate = RNA(n+1) + diphosphate. In terms of biological role, DNA-dependent RNA polymerase catalyzes the transcription of DNA into RNA using the four ribonucleoside triphosphates as substrates. This is DNA-directed RNA polymerase subunit beta' from Lysinibacillus sphaericus (strain C3-41).